Consider the following 203-residue polypeptide: Holliday junction branch migration complex subunit RuvA (203 aa).

Positions 1 to 64 are domain I; that stretch reads MIGRLRGIII…EDAQLLYGFN (64 aa). Residues 65–142 form a domain II region; it reads NKQERTLFKE…KGLHGDLFTP (78 aa). The flexible linker stretch occupies residues 143-154; that stretch reads AADLVLTSPASP. Positions 155–203 are domain III; it reads ATDDAEQEAVAALVALGYKPQEASRMVSKIARPDASSETLIREALHAAL.

Belongs to the RuvA family. In terms of assembly, homotetramer. Forms an RuvA(8)-RuvB(12)-Holliday junction (HJ) complex. HJ DNA is sandwiched between 2 RuvA tetramers; dsDNA enters through RuvA and exits via RuvB. An RuvB hexamer assembles on each DNA strand where it exits the tetramer. Each RuvB hexamer is contacted by two RuvA subunits (via domain III) on 2 adjacent RuvB subunits; this complex drives branch migration. In the full resolvosome a probable DNA-RuvA(4)-RuvB(12)-RuvC(2) complex forms which resolves the HJ.

The protein localises to the cytoplasm. Its function is as follows. The RuvA-RuvB-RuvC complex processes Holliday junction (HJ) DNA during genetic recombination and DNA repair, while the RuvA-RuvB complex plays an important role in the rescue of blocked DNA replication forks via replication fork reversal (RFR). RuvA specifically binds to HJ cruciform DNA, conferring on it an open structure. The RuvB hexamer acts as an ATP-dependent pump, pulling dsDNA into and through the RuvAB complex. HJ branch migration allows RuvC to scan DNA until it finds its consensus sequence, where it cleaves and resolves the cruciform DNA. This Escherichia fergusonii (strain ATCC 35469 / DSM 13698 / CCUG 18766 / IAM 14443 / JCM 21226 / LMG 7866 / NBRC 102419 / NCTC 12128 / CDC 0568-73) protein is Holliday junction branch migration complex subunit RuvA.